The chain runs to 1051 residues: Carbamoyl phosphate synthase large chain (1051 aa).

Residues 1–399 (MKETPKKVLV…SLQKAVRMLD (399 aa)) form a carboxyphosphate synthetic domain region. Residues R127, R167, G173, G174, K206, L208, E213, G239, V240, H241, Q282, and E296 each contribute to the ATP site. The 195-residue stretch at 131–325 (RETMIENNLP…LAYVSAKLAL (195 aa)) folds into the ATP-grasp 1 domain. The Mg(2+) site is built by Q282, E296, and N298. Residues Q282, E296, and N298 each contribute to the Mn(2+) site. Positions 400–548 (IGEPGVVGGK…LTYNGTEDDL (149 aa)) are oligomerization domain. The tract at residues 549 to 930 (EFSQGNKLLI…LKSWLSSIPN (382 aa)) is carbamoyl phosphate synthetic domain. In terms of domain architecture, ATP-grasp 2 spans 673-863 (SKLLDKLGIS…LINEAMKAIF (191 aa)). The ATP site is built by R709, K748, I750, E755, G779, V780, H781, S782, Q822, and E834. Mg(2+)-binding residues include Q822, E834, and N836. Residues Q822, E834, and N836 each contribute to the Mn(2+) site. In terms of domain architecture, MGS-like spans 930–1051 (NRIPNKNGIA…FEISEYGGGI (122 aa)). The allosteric domain stretch occupies residues 931 to 1051 (RIPNKNGIAL…FEISEYGGGI (121 aa)).

It belongs to the CarB family. In terms of assembly, composed of two chains; the small (or glutamine) chain promotes the hydrolysis of glutamine to ammonia, which is used by the large (or ammonia) chain to synthesize carbamoyl phosphate. Tetramer of heterodimers (alpha,beta)4. It depends on Mg(2+) as a cofactor. Mn(2+) is required as a cofactor.

It carries out the reaction hydrogencarbonate + L-glutamine + 2 ATP + H2O = carbamoyl phosphate + L-glutamate + 2 ADP + phosphate + 2 H(+). It catalyses the reaction hydrogencarbonate + NH4(+) + 2 ATP = carbamoyl phosphate + 2 ADP + phosphate + 2 H(+). It functions in the pathway amino-acid biosynthesis; L-arginine biosynthesis; carbamoyl phosphate from bicarbonate: step 1/1. The protein operates within pyrimidine metabolism; UMP biosynthesis via de novo pathway; (S)-dihydroorotate from bicarbonate: step 1/3. Large subunit of the glutamine-dependent carbamoyl phosphate synthetase (CPSase). CPSase catalyzes the formation of carbamoyl phosphate from the ammonia moiety of glutamine, carbonate, and phosphate donated by ATP, constituting the first step of 2 biosynthetic pathways, one leading to arginine and/or urea and the other to pyrimidine nucleotides. The large subunit (synthetase) binds the substrates ammonia (free or transferred from glutamine from the small subunit), hydrogencarbonate and ATP and carries out an ATP-coupled ligase reaction, activating hydrogencarbonate by forming carboxy phosphate which reacts with ammonia to form carbamoyl phosphate. The protein is Carbamoyl phosphate synthase large chain of Saccharolobus islandicus (strain L.S.2.15 / Lassen #1) (Sulfolobus islandicus).